A 1159-amino-acid chain; its full sequence is ABC transporter G family member 24 (1159 aa).

2 helical membrane-spanning segments follow: residues 11-31 and 415-435; these read FNSI…GNNC and VGSG…FLIF. The ABC transporter domain occupies 454 to 707; the sequence is LSFHNISCYV…FIKQKIAGMT (254 aa). Residue 497–504 participates in ATP binding; that stretch reads GLSGSGKT. The segment at 752–846 is disordered; that stretch reads QSTSPALSSN…DNNNKNNDDD (95 aa). Low complexity-rich tracts occupy residues 759–768 and 775–784; these read SSNSNNSDIN and INNPHNQNIH. Residues 785–795 show a composition bias toward basic residues; it reads HQQHHHHHRHI. Residues 822–841 are compositionally biased toward low complexity; sequence DNINNNNNNNKVKNNDNNNK. The ABC transmembrane type-2 domain maps to 902–1154; the sequence is FLLRTTYFVH…LLAYVFLRFL (253 aa). A run of 6 helical transmembrane segments spans residues 909–929, 937–957, 1005–1025, 1047–1067, 1074–1094, and 1135–1155; these read FVHI…PANL, FGAM…SLDL, YMIG…SLVL, ANMV…FLLA, YLIG…PVVN, and VLLG…RFLV.

This sequence belongs to the ABC transporter superfamily. ABCG family. Eye pigment precursor importer (TC 3.A.1.204) subfamily.

It localises to the membrane. The polypeptide is ABC transporter G family member 24 (abcG24) (Dictyostelium discoideum (Social amoeba)).